A 749-amino-acid chain; its full sequence is RNA-binding protein 5-B (749 aa).

Residues 1-88 (MGSDKRVSRS…YHSDGDYMDH (88 aa)) form a disordered region. The RRM 1 domain maps to 102-182 (KTIMLRGLPI…KTIAMHYSNP (81 aa)). Residues 185–214 (KFEDWLCNKCGLYNFRRRLKCFRCGAAKAE) form a RanBP2-type zinc finger. Residues 241-325 (SAIILRNIGP…KTIGVDFAKS (85 aa)) form the RRM 2 domain. Disordered stretches follow at residues 425-471 (QMYQ…SVPD), 520-558 (PAADGTGQSGAQPNGANPGTSKEGKEKKEKPKSKTAQQI), 570-595 (NKQKENFKNSFQPLSSRDEERKESAA), and 626-680 (TEEE…NSNI). Over residues 429–460 (QPGSPTQSGTSTAASTTPASTTSTEEATTPTA) the composition is skewed to low complexity. Composition is skewed to basic and acidic residues over residues 585 to 594 (SRDEERKESA) and 627 to 648 (EEEKPPNAKYRDRAAERREKYG). A G-patch domain is found at 677–723 (NSNIGNKMLQAMGWKEGSGLGRKSQGITAPIQAQVRMRGAGLGAKGS).

It belongs to the RBM5/RBM10 family. Component of the spliceosome A complex (also known as the prespliceosome). Appears to dissociate from the spliceosome upon formation of the spliceosome B complex (also known as the precatalytic spliceosome), in which the heterotrimeric U4/U6.U5 snRNPs are bound.

Its subcellular location is the nucleus. Component of the spliceosome A complex. Regulates alternative splicing of a number of mRNAs. May modulate splice site pairing after recruitment of the U1 and U2 snRNPs to the 5' and 3' splice sites of the intron. In Xenopus laevis (African clawed frog), this protein is RNA-binding protein 5-B (rbm5-b).